The sequence spans 867 residues: Leucine--tRNA ligase (867 aa).

The 'HIGH' region motif lies at 42–52; sequence PYPSGKLHMGH. The 'KMSKS' region motif lies at 631-635; the sequence is KMSKS. Lys-634 lines the ATP pocket.

Belongs to the class-I aminoacyl-tRNA synthetase family.

It localises to the cytoplasm. It catalyses the reaction tRNA(Leu) + L-leucine + ATP = L-leucyl-tRNA(Leu) + AMP + diphosphate. The chain is Leucine--tRNA ligase from Dichelobacter nodosus (strain VCS1703A).